A 431-amino-acid polypeptide reads, in one-letter code: Adenylosuccinate synthetase (431 aa).

GTP-binding positions include 12–18 (GDEGKGK) and 40–42 (GHT). Catalysis depends on D13, which acts as the Proton acceptor. 2 residues coordinate Mg(2+): D13 and G40. IMP-binding positions include 13–16 (DEGK), 38–41 (NAGH), T130, R144, Q224, T239, and R303. H41 acts as the Proton donor in catalysis. 299-305 (STTGRPR) is a binding site for substrate. GTP contacts are provided by residues R305, 331 to 333 (KAD), and 413 to 415 (SIG).

It belongs to the adenylosuccinate synthetase family. Homodimer. The cofactor is Mg(2+).

It is found in the cytoplasm. The catalysed reaction is IMP + L-aspartate + GTP = N(6)-(1,2-dicarboxyethyl)-AMP + GDP + phosphate + 2 H(+). The protein operates within purine metabolism; AMP biosynthesis via de novo pathway; AMP from IMP: step 1/2. Functionally, plays an important role in the de novo pathway of purine nucleotide biosynthesis. Catalyzes the first committed step in the biosynthesis of AMP from IMP. In Cytophaga hutchinsonii (strain ATCC 33406 / DSM 1761 / CIP 103989 / NBRC 15051 / NCIMB 9469 / D465), this protein is Adenylosuccinate synthetase.